We begin with the raw amino-acid sequence, 347 residues long: Aurora kinase A- and ninein-interacting protein (347 aa).

The interaction with AURKA stretch occupies residues 182–347; the sequence is QREAKRKREG…DSEGNRVIRH (166 aa). Positions 273–347 are interaction with RBBP8/CtIP; the sequence is RDSWSQLFTE…DSEGNRVIRH (75 aa). Residue serine 284 is modified to Phosphoserine. The segment covering 301 to 322 has biased composition (polar residues); sequence VTNARNQGSGQFPDSPQAQGQD. A disordered region spans residues 301-325; the sequence is VTNARNQGSGQFPDSPQAQGQDGPT.

This sequence belongs to the AUNIP family. As to quaternary structure, interacts (via C-terminus) with AURKA (via C-terminus). Interacts (via N-terminus) with NIN; this interaction blocks NIN phosphorylation by both AURKA and GSK3B. Identified in a complex with NIN and AURKA. Interacts with RBBP8/CtIP.

The protein resides in the nucleus. Its subcellular location is the chromosome. The protein localises to the cytoplasm. It localises to the cytoskeleton. It is found in the microtubule organizing center. The protein resides in the centrosome. Its subcellular location is the spindle pole. Its function is as follows. DNA-binding protein that accumulates at DNA double-strand breaks (DSBs) following DNA damage and promotes DNA resection and homologous recombination. Serves as a sensor of DNA damage: binds DNA with a strong preference for DNA substrates that mimic structures generated at stalled replication forks, and anchors RBBP8/CtIP to DSB sites to promote DNA end resection and ensuing homologous recombination repair. Inhibits non-homologous end joining (NHEJ). Required for the dynamic movement of AURKA at the centrosomes and spindle apparatus during the cell cycle. This chain is Aurora kinase A- and ninein-interacting protein, found in Rattus norvegicus (Rat).